Here is a 342-residue protein sequence, read N- to C-terminus: Methylthioribose-1-phosphate isomerase (342 aa).

Residues 49–51 (RGA), arginine 86, and glutamine 187 contribute to the substrate site. The active-site Proton donor is aspartate 228. 238-239 (NK) contributes to the substrate binding site.

It belongs to the eIF-2B alpha/beta/delta subunits family. MtnA subfamily.

It carries out the reaction 5-(methylsulfanyl)-alpha-D-ribose 1-phosphate = 5-(methylsulfanyl)-D-ribulose 1-phosphate. The protein operates within amino-acid biosynthesis; L-methionine biosynthesis via salvage pathway; L-methionine from S-methyl-5-thio-alpha-D-ribose 1-phosphate: step 1/6. Catalyzes the interconversion of methylthioribose-1-phosphate (MTR-1-P) into methylthioribulose-1-phosphate (MTRu-1-P). The sequence is that of Methylthioribose-1-phosphate isomerase from Klebsiella pneumoniae subsp. pneumoniae (strain ATCC 700721 / MGH 78578).